Here is a 113-residue protein sequence, read N- to C-terminus: MSNQALLETLNQTTELLSVKLAELAKLASMETNEDTEDCQLSVVTNGLMMVNNQTLQLVRGVQDLILLTRNIREKWLLTQIPEQLTPKEQDSINHEELTELLESCVSEIISDV.

This sequence belongs to the Mediator complex subunit 22 family. In terms of assembly, component of the Mediator complex.

It is found in the nucleus. Component of the Mediator complex, a coactivator involved in the regulated transcription of nearly all RNA polymerase II-dependent genes. Mediator functions as a bridge to convey information from gene-specific regulatory proteins to the basal RNA polymerase II transcription machinery. Mediator is recruited to promoters by direct interactions with regulatory proteins and serves as a scaffold for the assembly of a functional preinitiation complex with RNA polymerase II and the general transcription factors. The protein is Mediator of RNA polymerase II transcription subunit 22 (SRB6) of Candida glabrata (strain ATCC 2001 / BCRC 20586 / JCM 3761 / NBRC 0622 / NRRL Y-65 / CBS 138) (Yeast).